The sequence spans 721 residues: Glycine--tRNA ligase beta subunit (721 aa).

Belongs to the class-II aminoacyl-tRNA synthetase family. Tetramer of two alpha and two beta subunits.

It is found in the cytoplasm. The enzyme catalyses tRNA(Gly) + glycine + ATP = glycyl-tRNA(Gly) + AMP + diphosphate. The chain is Glycine--tRNA ligase beta subunit from Sinorhizobium fredii (strain NBRC 101917 / NGR234).